The following is a 202-amino-acid chain: Large ribosomal subunit protein mL40 (202 aa).

The tract at residues 42 to 79 (IQHQQTASYASKGKSGPPAGMFSGQKAGSKKSKGPKQV) is disordered.

Belongs to the mitochondrion-specific ribosomal protein mL40 family. As to quaternary structure, component of the mitochondrial large ribosomal subunit (mt-LSU). Mature N.crassa 74S mitochondrial ribosomes consist of a small (37S) and a large (54S) subunit. The 37S small subunit contains a 16S ribosomal RNA (16S mt-rRNA) and 32 different proteins. The 54S large subunit contains a 23S rRNA (23S mt-rRNA) and 42 different proteins. mL40 is binding to NAD.

It is found in the mitochondrion. Its function is as follows. Component of the mitochondrial ribosome (mitoribosome), a dedicated translation machinery responsible for the synthesis of mitochondrial genome-encoded proteins, including at least some of the essential transmembrane subunits of the mitochondrial respiratory chain. The mitoribosomes are attached to the mitochondrial inner membrane and translation products are cotranslationally integrated into the membrane. The sequence is that of Large ribosomal subunit protein mL40 (mrpl28) from Neurospora crassa (strain ATCC 24698 / 74-OR23-1A / CBS 708.71 / DSM 1257 / FGSC 987).